A 300-amino-acid chain; its full sequence is Geranylgeranyl pyrophosphate synthase (300 aa).

Residue Met-1 is modified to N-acetylmethionine. Residues Lys-25, Arg-28, and His-57 each contribute to the isopentenyl diphosphate site. Mg(2+) is bound by residues Asp-64 and Asp-68. Dimethylallyl diphosphate is bound at residue Arg-73. Arg-74 is an isopentenyl diphosphate binding site. Residues Lys-151, Thr-152, Gln-185, Lys-202, and Lys-212 each coordinate dimethylallyl diphosphate.

Belongs to the FPP/GGPP synthase family. As to quaternary structure, homohexamer; trimer of homodimers. Mg(2+) serves as cofactor. As to expression, abundantly expressed in testis. Found in other tissues to a lower extent. Expressed in dermal fibroblast and skeletal muscle.

It is found in the cytoplasm. The protein localises to the perinuclear region. Its subcellular location is the myofibril. The protein resides in the sarcomere. It localises to the z line. The catalysed reaction is isopentenyl diphosphate + dimethylallyl diphosphate = (2E)-geranyl diphosphate + diphosphate. The enzyme catalyses isopentenyl diphosphate + (2E)-geranyl diphosphate = (2E,6E)-farnesyl diphosphate + diphosphate. It catalyses the reaction isopentenyl diphosphate + (2E,6E)-farnesyl diphosphate = (2E,6E,10E)-geranylgeranyl diphosphate + diphosphate. It functions in the pathway isoprenoid biosynthesis; farnesyl diphosphate biosynthesis; farnesyl diphosphate from geranyl diphosphate and isopentenyl diphosphate: step 1/1. It participates in isoprenoid biosynthesis; geranyl diphosphate biosynthesis; geranyl diphosphate from dimethylallyl diphosphate and isopentenyl diphosphate: step 1/1. The protein operates within isoprenoid biosynthesis; geranylgeranyl diphosphate biosynthesis; geranylgeranyl diphosphate from farnesyl diphosphate and isopentenyl diphosphate: step 1/1. With respect to regulation, subject to product inhibition by geranylgeranyl diphosphate. Functionally, catalyzes the trans-addition of the three molecules of IPP onto DMAPP to form geranylgeranyl pyrophosphate, an important precursor of carotenoids and geranylated proteins. This is Geranylgeranyl pyrophosphate synthase (GGPS1) from Homo sapiens (Human).